The following is a 259-amino-acid chain: Triosephosphate isomerase (259 aa).

10 to 12 (NWK) is a binding site for substrate. The active-site Electrophile is His-100. Glu-172 (proton acceptor) is an active-site residue. Substrate-binding positions include Gly-178, Ser-218, and 239–240 (GG).

Belongs to the triosephosphate isomerase family. Homodimer.

It is found in the cytoplasm. The catalysed reaction is D-glyceraldehyde 3-phosphate = dihydroxyacetone phosphate. It participates in carbohydrate biosynthesis; gluconeogenesis. The protein operates within carbohydrate degradation; glycolysis; D-glyceraldehyde 3-phosphate from glycerone phosphate: step 1/1. Functionally, involved in the gluconeogenesis. Catalyzes stereospecifically the conversion of dihydroxyacetone phosphate (DHAP) to D-glyceraldehyde-3-phosphate (G3P). The sequence is that of Triosephosphate isomerase from Corynebacterium glutamicum (strain ATCC 13032 / DSM 20300 / JCM 1318 / BCRC 11384 / CCUG 27702 / LMG 3730 / NBRC 12168 / NCIMB 10025 / NRRL B-2784 / 534).